The sequence spans 208 residues: Large ribosomal subunit protein uL4 (208 aa).

A compositionally biased stretch (basic and acidic residues) spans 47–58; the sequence is ARAARERSDVAR. The tract at residues 47-84 is disordered; that stretch reads ARAARERSDVARTGKKFGRQKGGGTARHGDRRAPIFIG.

Belongs to the universal ribosomal protein uL4 family. As to quaternary structure, part of the 50S ribosomal subunit.

In terms of biological role, one of the primary rRNA binding proteins, this protein initially binds near the 5'-end of the 23S rRNA. It is important during the early stages of 50S assembly. It makes multiple contacts with different domains of the 23S rRNA in the assembled 50S subunit and ribosome. Forms part of the polypeptide exit tunnel. This is Large ribosomal subunit protein uL4 from Sphingopyxis alaskensis (strain DSM 13593 / LMG 18877 / RB2256) (Sphingomonas alaskensis).